We begin with the raw amino-acid sequence, 494 residues long: ATP synthase subunit alpha, chloroplastic (494 aa).

An ATP-binding site is contributed by 170–177; it reads GDRQTGKT.

Belongs to the ATPase alpha/beta chains family. F-type ATPases have 2 components, CF(1) - the catalytic core - and CF(0) - the membrane proton channel. CF(1) has five subunits: alpha(3), beta(3), gamma(1), delta(1), epsilon(1). CF(0) has four main subunits: a, b, b' and c.

It is found in the plastid. Its subcellular location is the chloroplast thylakoid membrane. It carries out the reaction ATP + H2O + 4 H(+)(in) = ADP + phosphate + 5 H(+)(out). Its function is as follows. Produces ATP from ADP in the presence of a proton gradient across the membrane. The alpha chain is a regulatory subunit. The sequence is that of ATP synthase subunit alpha, chloroplastic from Pinus thunbergii (Japanese black pine).